The primary structure comprises 625 residues: MAIRQLPEILINQIAAGEVVERPASVVKELVENALDAGATRVDIELEEGGVRLIRIRDNGGGITPDELPLAVSRHATSKIASLDDLETVATLGFRGEALPSIASVSRFTLTSRRHDAEHGSALEIDGGRLGEVVPRAHAPGTTVEVRELFFNVPARRKFLRAERTELGHIEEWLRSLALARPDVELRVSHNGKPSRRYKPGDLYSDARLGETLGDDFARQALRVDHSGAGLRLHGWVAQPHYSRASTDQQYLYVNGRSVRERSVAHAVKMAYGDVLFHGRQPAYVLFLELDPARVDVNVHPAKHEVRFREARLIHDFVYRTLQDALAHTRAGATPNSIGGDGTGYTAATSGGMGGIASGGVPGNGGASIGSGGAYSYASWTPSQTPLGLRVDEARAAYSALYAPPPSSAQQSAGMPNMAGTGLPATAQDSGVPPLGYAIAQLHGIYILAENAEGLIVVDMHAAHERIGYERLKHAHDSIGLHAQPLLVPMTLAVGEREADTAEREAETLATLGFEITRAGPQSLHVRSIPALLANAEPEALLRDVLSDLREHGQSRRIASARDELLSTMACHGAVRANRRLTVPEMNALLRDMEATERSGQCNHGRPTWARFTLSDIDRWFLRGR.

Belongs to the DNA mismatch repair MutL/HexB family.

Its function is as follows. This protein is involved in the repair of mismatches in DNA. It is required for dam-dependent methyl-directed DNA mismatch repair. May act as a 'molecular matchmaker', a protein that promotes the formation of a stable complex between two or more DNA-binding proteins in an ATP-dependent manner without itself being part of a final effector complex. The chain is DNA mismatch repair protein MutL from Xanthomonas axonopodis pv. citri (strain 306).